A 26-amino-acid chain; its full sequence is DGVCSNRRQCNKEVCGSSYDVAIVGA.

The protein belongs to the flavin monoamine oxidase family. In terms of assembly, monomer. Requires FAD as cofactor. Post-translationally, not glycosylated. As to expression, expressed by the ink gland.

The protein localises to the secreted. The catalysed reaction is an L-alpha-amino acid + O2 + H2O = a 2-oxocarboxylate + H2O2 + NH4(+). Catalyzes the oxidative deamination of positively charged L-amino acids L-Lys and L-Arg but not of amino acids L-His, L-Asp or L-Glu. Has antibacterial activity against the Gram-positive bacterium S.aureus (MIC=15 ug/ml). This antibacterial activity is bacteriostatic in the absence of amino acids L-Lys or L-Arg but bactericidal in their presence. The antibacterial effect is largely dependent on H(2)O(2) produced in the oxidative deamination of substrates. Has hemagglutinating activity towards rabbit erythrocytes. Hemagglutinating activity is inhibited by the glycoprotein fetuin, but not by glucose, mannose, galactose, N-acetylglucosamine, N-acetylgalactosamine or sialic acid. This Aplysia dactylomela (Spotted sea hare) protein is L-amino-acid oxidase.